Reading from the N-terminus, the 250-residue chain is 2,3-bisphosphoglycerate-dependent phosphoglycerate mutase (250 aa).

Substrate contacts are provided by residues 10 to 17 (RHGESQWN), 23 to 24 (TG), R62, 89 to 92 (ERHY), K100, 116 to 117 (RR), and 185 to 186 (GN). H11 serves as the catalytic Tele-phosphohistidine intermediate. Catalysis depends on E89, which acts as the Proton donor/acceptor.

It belongs to the phosphoglycerate mutase family. BPG-dependent PGAM subfamily. As to quaternary structure, homodimer.

The enzyme catalyses (2R)-2-phosphoglycerate = (2R)-3-phosphoglycerate. The protein operates within carbohydrate degradation; glycolysis; pyruvate from D-glyceraldehyde 3-phosphate: step 3/5. Its function is as follows. Catalyzes the interconversion of 2-phosphoglycerate and 3-phosphoglycerate. The polypeptide is 2,3-bisphosphoglycerate-dependent phosphoglycerate mutase (Sodalis glossinidius (strain morsitans)).